Reading from the N-terminus, the 279-residue chain is Pantothenate synthetase (279 aa).

26–33 serves as a coordination point for ATP; that stretch reads MGNLHEGH. H33 functions as the Proton donor in the catalytic mechanism. Q57 is a (R)-pantoate binding site. Q57 lines the beta-alanine pocket. Position 144 to 147 (144 to 147) interacts with ATP; sequence GKKD. Q150 is a (R)-pantoate binding site. ATP-binding positions include V173 and 181–184; that span reads LSSR.

This sequence belongs to the pantothenate synthetase family. As to quaternary structure, homodimer.

Its subcellular location is the cytoplasm. The enzyme catalyses (R)-pantoate + beta-alanine + ATP = (R)-pantothenate + AMP + diphosphate + H(+). It participates in cofactor biosynthesis; (R)-pantothenate biosynthesis; (R)-pantothenate from (R)-pantoate and beta-alanine: step 1/1. Functionally, catalyzes the condensation of pantoate with beta-alanine in an ATP-dependent reaction via a pantoyl-adenylate intermediate. The sequence is that of Pantothenate synthetase from Burkholderia ambifaria (strain ATCC BAA-244 / DSM 16087 / CCUG 44356 / LMG 19182 / AMMD) (Burkholderia cepacia (strain AMMD)).